The sequence spans 592 residues: Aspartate--tRNA ligase (592 aa).

Glu176 lines the L-aspartate pocket. Positions 200-203 (QIFK) are aspartate. Arg222 contributes to the L-aspartate binding site. ATP-binding positions include 222–224 (RDE) and Gln231. His450 is an L-aspartate binding site. Glu484 contacts ATP. Arg491 is an L-aspartate binding site. 536–539 (GLDR) contacts ATP.

Belongs to the class-II aminoacyl-tRNA synthetase family. Type 1 subfamily. Homodimer.

The protein resides in the cytoplasm. The enzyme catalyses tRNA(Asp) + L-aspartate + ATP = L-aspartyl-tRNA(Asp) + AMP + diphosphate. Functionally, catalyzes the attachment of L-aspartate to tRNA(Asp) in a two-step reaction: L-aspartate is first activated by ATP to form Asp-AMP and then transferred to the acceptor end of tRNA(Asp). This Macrococcus caseolyticus (strain JCSC5402) (Macrococcoides caseolyticum) protein is Aspartate--tRNA ligase.